The primary structure comprises 374 residues: Outer membrane protein F (374 aa).

Residues 1–21 (MMKRNILAVVIPALLAAGAAN) form the signal peptide. A beta stranded membrane pass occupies residues 22 to 27 (AAEIYN). Residue Lys28 is a topological domain, periplasmic. A beta stranded transmembrane segment spans residues 29-44 (DGNKLDLYGKVDGLHY). At 45-55 (FSKDKGNDGDQ) the chain is on the extracellular side. The chain crosses the membrane as a beta stranded span at residues 56–68 (TYVRFGFKGETQI). Residues 69 to 70 (TD) are Periplasmic-facing. A beta stranded transmembrane segment spans residues 71 to 83 (QLTGYGQWEYNVQ). Over 84 to 97 (SNHAESQGTEGTKT) the chain is Extracellular. A beta stranded membrane pass occupies residues 98-107 (RLGFAGLKFA). Topologically, residues 108 to 110 (DYG) are periplasmic. Residues 111-116 (SFDYGR) form a beta stranded membrane-spanning segment. Over 117-151 (NYGVLYDVEGWTDMLPEFGGDTYTYSDNFMTGRTN) the chain is Extracellular. Residues 152–158 (GVATYRN) form a beta stranded membrane-spanning segment. The Periplasmic portion of the chain corresponds to 159 to 166 (NNFFGLVD). Residues 167-178 (GLNFALQYQGKN) traverse the membrane as a beta stranded segment. Residues 179–190 (QNDGRDVKKQNG) lie on the Extracellular side of the membrane. A beta stranded membrane pass occupies residues 191–201 (DGWGISSTYDI). Residues 202–203 (GE) are Periplasmic-facing. The beta stranded transmembrane segment at 204-216 (GVSFGAAYASSNR) threads the bilayer. Over 217–230 (TDDQKLRSNERGDK) the chain is Extracellular. Residues 231 to 242 (ADAWTVGAKYDA) form a beta stranded membrane-spanning segment. Residue Asn243 is a topological domain, periplasmic. Residues 244 to 255 (NVYLAAMYAETR) form a beta stranded membrane-spanning segment. Residues 256–280 (NMTPFGGGNFTNTCAATENCGGFAS) lie on the Extracellular side of the membrane. Residues 281 to 293 (KTQNFEVTAQYQF) traverse the membrane as a beta stranded segment. Topologically, residues 294 to 295 (DF) are periplasmic. Residues 296-309 (GLRPEVSYLQSKGK) form a beta stranded membrane-spanning segment. The Extracellular segment spans residues 310–322 (NLNVPGVGSDQDL). A beta stranded transmembrane segment spans residues 323–334 (VKYVSVGTTYYF). At 335-336 (NK) the chain is on the periplasmic side. Residues 337 to 346 (NMSTYVDYKI) traverse the membrane as a beta stranded segment. Topologically, residues 347–364 (NLLDDNDFTKATGIATDD) are extracellular. The beta stranded transmembrane segment at 365–374 (IVGVGLVYQF) threads the bilayer.

This sequence belongs to the Gram-negative porin family. In terms of assembly, homotrimer.

It is found in the cell outer membrane. Its function is as follows. Forms pores that allow passive diffusion of small molecules across the outer membrane. This Serratia marcescens protein is Outer membrane protein F (ompF).